Consider the following 991-residue polypeptide: Ribonuclease TUDOR 1 (991 aa).

Alanine 2 is subject to N-acetylalanine. TNase-like domains lie at 8–151, 186–364, 378–557, and 587–714; these read QWLK…RWSK, KPME…MWAN, QNFT…IHSA, and RRIP…IWEN. The interval 227–250 is disordered; that stretch reads RTTNGSVVETVPDEPNGDVSAESR. One can recognise a Tudor domain in the interval 782 to 847; sequence NPKRGDIVLA…RPIDPSVSAA (66 aa). Tyrosine 970 is subject to Phosphotyrosine. The segment at 971 to 991 is disordered; that stretch reads GDIESDDEDTGPARKPAGGRR. A Phosphoserine modification is found at serine 975. Phosphothreonine is present on threonine 980.

Expressed in seeds, leaves, flowers, roots and siliques (at protein level). Accumulates in the cap and elongation zone of the root apices (at protein level).

The protein resides in the cytoplasm. It localises to the cytoplasmic granule. It is found in the perinuclear region. The protein localises to the endoplasmic reticulum. With respect to regulation, repressed by the specific inhibitor 3',5'-deoxythymidine bisphosphate (pdTp); this RNase activity inhibition impairs subcellular relocation upon abiotic stress and leads to reduced stress resistance. Cytoprotective ribonuclease (RNase) required for resistance to abiotic stresses, acting as a positive regulator of mRNA decapping during stress. Essential for the integrity and function of cytoplasmic messenger ribonucleoprotein (mRNP) complexes called stress granules (SGs) and processing bodies (PBs), sites of post-transcriptional gene regulation during stress (e.g. salt and heat). Involved in gibberellic acid (GA) biosynthesis. Essential for stress tolerance, probably by regulating mRNAs entering the secretory pathway. Component of stress granules (SGs) that regulates growth under salt stress by modulating levels of GA20OX3 mRNA. Binds GA20OX3 mRNA. May inhibit the degradation of mRNAs involved in stress adaptation. This chain is Ribonuclease TUDOR 1, found in Arabidopsis thaliana (Mouse-ear cress).